Here is a 144-residue protein sequence, read N- to C-terminus: RxLR effector protein PITG_03192 (144 aa).

An N-terminal signal peptide occupies residues 1–24 (MRVGFVFALLVVSVIVCFNGLTSA). The short motif at 49 to 58 (RNLRASGEER) is the RxLR-dEER element. The N-linked (GlcNAc...) asparagine glycan is linked to asparagine 115. The helical transmembrane segment at 122–142 (FFILATLVMFPIGVWAVVTNY) threads the bilayer.

Belongs to the RxLR effector family. Interacts with the C-terminal portions the ER-associated potato NAC transcription factors NTP1 and NTP2.

It localises to the secreted. It is found in the host endoplasmic reticulum membrane. Its function is as follows. Effector that is required for full virulence. Targets host NTP1 and NTP2 transcription factors and prevents their pathogen-associated molecular pattern (PAMP)-triggered re-localization from the endoplasmic reticulum into the nucleus, where they contribute to prevent disease progression by P.infestans. The protein is RxLR effector protein PITG_03192 of Phytophthora infestans (strain T30-4) (Potato late blight agent).